The following is a 167-amino-acid chain: Protein archease (167 aa).

Ala-2 is subject to N-acetylalanine. 3 residues coordinate Ca(2+): Asp-39, Asp-166, and Ile-167.

It belongs to the archease family. Component of the tRNA-splicing ligase complex.

Its function is as follows. Component of the tRNA-splicing ligase complex required to facilitate the enzymatic turnover of catalytic subunit RTCB. Together with DDX1, acts by facilitating the guanylylation of RTCB, a key intermediate step in tRNA ligation. This chain is Protein archease (ZBTB8OS), found in Homo sapiens (Human).